We begin with the raw amino-acid sequence, 329 residues long: Epoxide hydrolase (329 aa).

Positions 35–308 (PAVLFCHGFP…DNVGHWVQHE (274 aa)) constitute an AB hydrolase-1 domain. The active-site Nucleophile is Asp-111. Catalysis depends on Tyr-242, which acts as the Proton donor. The Proton acceptor role is filled by His-303.

Belongs to the AB hydrolase superfamily. Epoxide hydrolase family. In terms of assembly, homodimer.

The enzyme catalyses an epoxide + H2O = an ethanediol. The catalysed reaction is (R)-styrene oxide + H2O = (R)-styrene glycol. It carries out the reaction (S)-styrene oxide + H2O = (S)-styrene glycol. It catalyses the reaction 3,4-epoxy-1-cyclohexene + H2O = cyclohex-3-ene-1,2-diol. Its function is as follows. Catalyzes the hydrolysis of various epoxides into diols. In vitro, shows the strongest activity toward aromatic and cyclic aliphatic epoxide compounds, since it shows strong activity toward (R)-styrene oxide, (S)-styrene oxide, and 3,4-epoxy-1-cyclohexene, but very weak activity toward (R)-epichlorohydrin, (S)-epichlorohydrin, and 1,2-epoxy-9-decene. The protein is Epoxide hydrolase of Caballeronia sordidicola (Burkholderia sordidicola).